A 371-amino-acid chain; its full sequence is Interstrand DNA cross-link repair glycosylase (371 aa).

Positions 37 to 39 (QAQ) match the QXQ; important for activity motif.

The protein belongs to the DNA glycosylase AlkZ-like family.

In terms of biological role, DNA glycosylase involved in the repair of interstrand DNA cross-links (ICLs), which are highly toxic DNA lesions that covalently tether the opposing strands of DNA, thereby inhibiting essential cellular processes such as DNA replication and transcription. Acts by unhooking both sides of the ICLs, forming abasic (AP) sites on both strands. AlkZ specifically repairs DNA damage induced by azinomycin B (AZB), a natural product with potent antibiotic and antitumor activities that interacts covalently with duplex DNA and forms ICLs. AlkZ thus confers self-resistance to azinomycin B, which is produced by S.sahachiroi. It may also protect target sites by protein-DNA interaction. Binds sequence non-specifically to native DNA and structure-specifically to azinomycin B-modified sites, with higher affinity to azinomycin B-modified sites and lower affinity to native DNA duplex. In vitro, also acts on monoadducts and can catalyze the excision of N7-methylguanine (7mGua) from an oligonucleotide containing N7-methyldeoxyguanosine (d7mG). Is a monofunctional DNA glycosylase that does not have lyase activity. This chain is Interstrand DNA cross-link repair glycosylase, found in Streptomyces sahachiroi.